Consider the following 396-residue polypeptide: Lysophospholipid transporter LplT (396 aa).

The Periplasmic portion of the chain corresponds to 1-17 (MSESVHTNTSLWSKGMK). The chain crosses the membrane as a helical span at residues 18-38 (AVIVAQFLSAFGDNALLFATL). Over 39-52 (ALLKAQFYPEWSQP) the chain is Cytoplasmic. The helical transmembrane segment at 53 to 73 (ILQMVFVGAYILLAPFVGQVA) threads the bilayer. The Periplasmic portion of the chain corresponds to 74–90 (DSFAKGRVMMFANGLKL). Residues 91 to 111 (LGAASICFGINPFLGYTLVGV) traverse the membrane as a helical segment. Residues 112 to 144 (GAAAYSPAKYGILGELTTGSKLVKANGLMEASA) are Cytoplasmic-facing. The chain crosses the membrane as a helical span at residues 145–165 (IAAILLGSVAGGVLADWHVLV). Residue Ala-166 is a topological domain, periplasmic. A helical transmembrane segment spans residues 167–187 (LAACALAYGGAVVANIYIPKL). Over 188 to 225 (AARPGQSWNLINMTRSFLNACTSLWCNGETRFSLVGAS) the chain is Cytoplasmic. The helical transmembrane segment at 226-246 (LFWGAGVTLRFLLVLWVPVAL) threads the bilayer. Topologically, residues 247 to 255 (GITDNATPT) are periplasmic. A helical membrane pass occupies residues 256 to 276 (YLNAMVAIGIVVGAGAAAKLV). The Cytoplasmic segment spans residues 277–279 (TLE). Residues 280-300 (TVSRCMPAGILIGVVVLIFSL) form a helical membrane-spanning segment. Topologically, residues 301-303 (QHE) are periplasmic. A helical membrane pass occupies residues 304-324 (LLPAYALLMLIGVLGGFFVVP). At 325 to 342 (LNALLQERGKKSVGAGNA) the chain is on the cytoplasmic side. A helical transmembrane segment spans residues 343–363 (IAVQNLGENSAMLLMLGIYSL). Residues 364–365 (AV) lie on the Periplasmic side of the membrane. The chain crosses the membrane as a helical span at residues 366–386 (MVGIPVVPIGIGFGALFALAI). The Cytoplasmic portion of the chain corresponds to 387 to 396 (TALWIWQRRH).

It belongs to the major facilitator superfamily. LplT (TC 2.A.1.42) family.

The protein resides in the cell inner membrane. Its function is as follows. Catalyzes the facilitated diffusion of 2-acyl-glycero-3-phosphoethanolamine (2-acyl-GPE) into the cell. In Shigella flexneri serotype 5b (strain 8401), this protein is Lysophospholipid transporter LplT.